Reading from the N-terminus, the 432-residue chain is Trigger factor (432 aa).

One can recognise a PPIase FKBP-type domain in the interval 161–246; sequence EDRVTIDFTG…LKKVEERELP (86 aa).

This sequence belongs to the FKBP-type PPIase family. Tig subfamily. Homodimer and monomer. In vivo most of the ribosomes are in complex with monomeric TF. Uncomplexed TF, however, is in a monomer-dimer equilibrium with approximately two thirds of TF existing in a dimeric state.

The protein localises to the cytoplasm. It catalyses the reaction [protein]-peptidylproline (omega=180) = [protein]-peptidylproline (omega=0). In terms of biological role, involved in protein export. Acts as a chaperone by maintaining the newly synthesized protein in an open conformation. Functions as a peptidyl-prolyl cis-trans isomerase. This chain is Trigger factor, found in Shigella boydii serotype 18 (strain CDC 3083-94 / BS512).